The primary structure comprises 393 residues: Formate-dependent phosphoribosylglycinamide formyltransferase (393 aa).

Residues 22-23 (EL) and E82 contribute to the N(1)-(5-phospho-beta-D-ribosyl)glycinamide site. ATP contacts are provided by residues R114, K155, 160–165 (SSGKGQ), 195–198 (EGFI), and E203. Residues 119-308 (RLAAEELDLP…QFALHARAIL (190 aa)) form the ATP-grasp domain. Mg(2+) contacts are provided by E267 and E279. Residues D286, K356, and 363-364 (RR) each bind N(1)-(5-phospho-beta-D-ribosyl)glycinamide.

It belongs to the PurK/PurT family. In terms of assembly, homodimer.

It catalyses the reaction N(1)-(5-phospho-beta-D-ribosyl)glycinamide + formate + ATP = N(2)-formyl-N(1)-(5-phospho-beta-D-ribosyl)glycinamide + ADP + phosphate + H(+). It participates in purine metabolism; IMP biosynthesis via de novo pathway; N(2)-formyl-N(1)-(5-phospho-D-ribosyl)glycinamide from N(1)-(5-phospho-D-ribosyl)glycinamide (formate route): step 1/1. In terms of biological role, involved in the de novo purine biosynthesis. Catalyzes the transfer of formate to 5-phospho-ribosyl-glycinamide (GAR), producing 5-phospho-ribosyl-N-formylglycinamide (FGAR). Formate is provided by PurU via hydrolysis of 10-formyl-tetrahydrofolate. The chain is Formate-dependent phosphoribosylglycinamide formyltransferase from Pseudomonas putida (strain GB-1).